The chain runs to 185 residues: Threonylcarbamoyl-AMP synthase (185 aa).

The YrdC-like domain occupies 3 to 185 (EQAPAEVKQV…IDAISGKILR (183 aa)).

The protein belongs to the SUA5 family. TsaC subfamily.

It is found in the cytoplasm. It carries out the reaction L-threonine + hydrogencarbonate + ATP = L-threonylcarbamoyladenylate + diphosphate + H2O. Required for the formation of a threonylcarbamoyl group on adenosine at position 37 (t(6)A37) in tRNAs that read codons beginning with adenine. Catalyzes the conversion of L-threonine, HCO(3)(-)/CO(2) and ATP to give threonylcarbamoyl-AMP (TC-AMP) as the acyladenylate intermediate, with the release of diphosphate. The polypeptide is Threonylcarbamoyl-AMP synthase (Shewanella woodyi (strain ATCC 51908 / MS32)).